We begin with the raw amino-acid sequence, 311 residues long: uncharacterized protein (311 aa).

This is an uncharacterized protein from Mycoplasma genitalium (strain ATCC 33530 / DSM 19775 / NCTC 10195 / G37) (Mycoplasmoides genitalium).